We begin with the raw amino-acid sequence, 1313 residues long: Inactive protein tyrosine kinase pTKL (1313 aa).

2 MORN repeats span residues Tyr20–Asn42 and Phe45–Asn63. Asn63, Asn131, Asn178, Asn208, Asn254, Asn260, and Asn288 each carry an N-linked (GlcNAc...) asparagine glycan. Residues Trp300 to Thr365 enclose the SAM domain. 5 N-linked (GlcNAc...) asparagine glycosylation sites follow: Asn466, Asn516, Asn525, Asn528, and Asn534. Residues Glu569–Asn580 show a composition bias toward basic and acidic residues. The tract at residues Glu569–Glu631 is disordered. Residues Pro586–Lys604 are compositionally biased toward polar residues. N-linked (GlcNAc...) asparagine glycans are attached at residues Asn592, Asn598, Asn661, Asn678, Asn729, Asn735, and Asn749. Residue Lys782 participates in ATP binding. N-linked (GlcNAc...) asparagine glycans are attached at residues Asn790, Asn868, Asn940, Asn983, and Asn1000. The Protein kinase domain maps to Phe962–Met1294. An RVxF motif motif is present at residues Lys1052–Phe1055. N-linked (GlcNAc...) asparagine glycosylation is found at Asn1191 and Asn1198.

The protein belongs to the protein kinase superfamily. TKL Ser/Thr protein kinase family.

The protein resides in the parasitophorous vacuole. It localises to the host cell membrane. The protein localises to the host cytoplasm. Its subcellular location is the host cytoskeleton. This Plasmodium berghei (strain Anka) protein is Inactive protein tyrosine kinase pTKL.